We begin with the raw amino-acid sequence, 82 residues long: MNPIVAAASVIAAGLAVGLAAIGPGMGQGTAAGYAVEGIARQPEAEGKIRGALLLSFAFMESLTIYGLVVALALLFANPFAG.

The next 2 membrane-spanning stretches (helical) occupy residues 3-23 (PIVA…AAIG) and 57-77 (FAFM…LLFA).

Belongs to the ATPase C chain family. In terms of assembly, F-type ATPases have 2 components, F(1) - the catalytic core - and F(0) - the membrane proton channel. F(1) has five subunits: alpha(3), beta(3), gamma(1), delta(1), epsilon(1). F(0) has four main subunits: a(1), b(1), b'(1) and c(10-14). The alpha and beta chains form an alternating ring which encloses part of the gamma chain. F(1) is attached to F(0) by a central stalk formed by the gamma and epsilon chains, while a peripheral stalk is formed by the delta, b and b' chains.

It is found in the plastid. The protein localises to the chloroplast thylakoid membrane. In terms of biological role, f(1)F(0) ATP synthase produces ATP from ADP in the presence of a proton or sodium gradient. F-type ATPases consist of two structural domains, F(1) containing the extramembraneous catalytic core and F(0) containing the membrane proton channel, linked together by a central stalk and a peripheral stalk. During catalysis, ATP synthesis in the catalytic domain of F(1) is coupled via a rotary mechanism of the central stalk subunits to proton translocation. Functionally, key component of the F(0) channel; it plays a direct role in translocation across the membrane. A homomeric c-ring of between 10-14 subunits forms the central stalk rotor element with the F(1) delta and epsilon subunits. The sequence is that of ATP synthase subunit c, chloroplastic from Chlorella vulgaris (Green alga).